The sequence spans 316 residues: DnaJ homolog subfamily B member 13 (316 aa).

In terms of domain architecture, J spans 4–68 (DYYSVLGITR…MKRGIYDKFG (65 aa)).

As to quaternary structure, homodimer. Component of the axonemal radial spoke complex 1 (RS1), at least composed of spoke head proteins RSPH1, RSPH3, RSPH9 and the cilia-specific component RSPH4A or sperm-specific component RSPH6A, spoke stalk proteins RSPH14, DNAJB13, DYDC1, ROPN1L and NME5, and the anchor protein IQUB. Interacts with SUN5. Interacts with IQUB. Specifically expressed in testis and trachea.

It is found in the cell projection. The protein localises to the cilium. It localises to the flagellum. Functions as part of axonemal radial spoke complexes that play an important part in the motility of sperm and cilia. The protein is DnaJ homolog subfamily B member 13 (DNAJB13) of Homo sapiens (Human).